The sequence spans 275 residues: Large ribosomal subunit protein uL2 (275 aa).

Positions 227–261 (PVDHPHGGGEAKSGQGNPHPVTPWGVPTKGYKTRK) are disordered.

It belongs to the universal ribosomal protein uL2 family. Part of the 50S ribosomal subunit. Forms a bridge to the 30S subunit in the 70S ribosome.

One of the primary rRNA binding proteins. Required for association of the 30S and 50S subunits to form the 70S ribosome, for tRNA binding and peptide bond formation. It has been suggested to have peptidyltransferase activity; this is somewhat controversial. Makes several contacts with the 16S rRNA in the 70S ribosome. The chain is Large ribosomal subunit protein uL2 from Xylella fastidiosa (strain M23).